We begin with the raw amino-acid sequence, 285 residues long: Bifunctional protein FolD (285 aa).

NADP(+)-binding positions include 166–168 (GAS) and isoleucine 232.

The protein belongs to the tetrahydrofolate dehydrogenase/cyclohydrolase family. Homodimer.

It catalyses the reaction (6R)-5,10-methylene-5,6,7,8-tetrahydrofolate + NADP(+) = (6R)-5,10-methenyltetrahydrofolate + NADPH. The enzyme catalyses (6R)-5,10-methenyltetrahydrofolate + H2O = (6R)-10-formyltetrahydrofolate + H(+). Its pathway is one-carbon metabolism; tetrahydrofolate interconversion. In terms of biological role, catalyzes the oxidation of 5,10-methylenetetrahydrofolate to 5,10-methenyltetrahydrofolate and then the hydrolysis of 5,10-methenyltetrahydrofolate to 10-formyltetrahydrofolate. The sequence is that of Bifunctional protein FolD from Vibrio vulnificus (strain CMCP6).